Reading from the N-terminus, the 419-residue chain is Serine hydroxymethyltransferase (419 aa).

Residues leucine 120 and 124-126 contribute to the (6S)-5,6,7,8-tetrahydrofolate site; that span reads GHL. Lysine 229 is modified (N6-(pyridoxal phosphate)lysine).

It belongs to the SHMT family. Homodimer. Pyridoxal 5'-phosphate serves as cofactor.

The protein localises to the cytoplasm. The catalysed reaction is (6R)-5,10-methylene-5,6,7,8-tetrahydrofolate + glycine + H2O = (6S)-5,6,7,8-tetrahydrofolate + L-serine. Its pathway is one-carbon metabolism; tetrahydrofolate interconversion. It functions in the pathway amino-acid biosynthesis; glycine biosynthesis; glycine from L-serine: step 1/1. Its function is as follows. Catalyzes the reversible interconversion of serine and glycine with tetrahydrofolate (THF) serving as the one-carbon carrier. This reaction serves as the major source of one-carbon groups required for the biosynthesis of purines, thymidylate, methionine, and other important biomolecules. Also exhibits THF-independent aldolase activity toward beta-hydroxyamino acids, producing glycine and aldehydes, via a retro-aldol mechanism. This chain is Serine hydroxymethyltransferase, found in Herpetosiphon aurantiacus (strain ATCC 23779 / DSM 785 / 114-95).